Consider the following 319-residue polypeptide: Ribonucleoside-diphosphate reductase small chain (319 aa).

The Fe cation site is built by Asp70, Glu101, and His104. Tyr108 is an active-site residue. Residues Glu163, Glu197, and His200 each coordinate Fe cation. Positions 313-319 (FSLDVDF) are interaction with R1.

This sequence belongs to the ribonucleoside diphosphate reductase small chain family. As to quaternary structure, interacts with RNR1/OPG080 subunit. Can interact with host RNR1 supunit. Requires Fe cation as cofactor.

The enzyme catalyses a 2'-deoxyribonucleoside 5'-diphosphate + [thioredoxin]-disulfide + H2O = a ribonucleoside 5'-diphosphate + [thioredoxin]-dithiol. Its function is as follows. Ribonucleoside-diphosphate reductase holoenzyme provides the precursors necessary for viral DNA synthesis. Allows virus growth in non-dividing cells. Catalyzes the biosynthesis of deoxyribonucleotides from the corresponding ribonucleotides. In Variola virus, this protein is Ribonucleoside-diphosphate reductase small chain (OPG048).